The primary structure comprises 208 residues: Probable GTP-binding protein EngB (208 aa).

The 183-residue stretch at leucine 23 to threonine 205 folds into the EngB-type G domain. GTP-binding positions include glycine 31 to serine 38, glycine 57 to leucine 61, aspartate 84 to glycine 87, threonine 154 to aspartate 157, and phenylalanine 182 to alanine 184. The Mg(2+) site is built by serine 38 and threonine 59.

Belongs to the TRAFAC class TrmE-Era-EngA-EngB-Septin-like GTPase superfamily. EngB GTPase family. Requires Mg(2+) as cofactor.

Necessary for normal cell division and for the maintenance of normal septation. This Helicobacter pylori (strain P12) protein is Probable GTP-binding protein EngB.